Here is a 385-residue protein sequence, read N- to C-terminus: MTKHARFFLLPSFILISAALIAGCNDKGEEKAHVGEPQVTVHIVKTAPLEVKTELPGRTNAYRIAEVRPQVSGIVLNRNFTEGSDVQAGQSLYQIDPATYQANYDSAKGELAKSEAAAAIAHLTVKRYVPLVGTKYISQQEYDQAIADARQADAAVIAAKATVESARINLAYTKVTAPISGRIGKSTVTEGALVTNGQTTELATVQQLDPIYVDVTQSSNDFMRLKQSVEQGNLHKENATSNVELVMENGQTYPLKGTLQFSDVTVDESTGSITLRAVFPNPQHTLLPGMFVRARIDEGVQPDAILIPQQGVSRTPRGDATVLIVNDKSQVEARPVVASQAIGDKWLISEGLKSGDQVIVSGLQKARPGEQVKATTDTPADTASK.

The signal sequence occupies residues 1–23; it reads MTKHARFFLLPSFILISAALIAG. Cys24 is lipidated: N-palmitoyl cysteine. Cys24 carries the S-diacylglycerol cysteine lipid modification. The interval 366 to 385 is disordered; that stretch reads ARPGEQVKATTDTPADTASK. Over residues 373–385 the composition is skewed to polar residues; sequence KATTDTPADTASK.

The protein belongs to the membrane fusion protein (MFP) (TC 8.A.1) family. Part of the tripartite efflux system AcrEF-TolC, which is composed of an inner membrane transporter, AcrF, a periplasmic membrane fusion protein, AcrE, and an outer membrane component, TolC. The complex forms a large protein conduit and can translocate molecules across both the inner and outer membranes.

Its subcellular location is the cell inner membrane. In terms of biological role, part of the tripartite efflux system AcrEF-TolC. Involved in the efflux of indole and organic solvents. In Escherichia coli (strain K12), this protein is Multidrug export protein AcrE (acrE).